Reading from the N-terminus, the 88-residue chain is Actobindin (88 aa).

Methionine 1 carries the N-acetylmethionine modification. The tract at residues 1 to 22 (MNPELQSAIGQGAALKHAETVD) is disordered. Residue lysine 35 is modified to N6,N6,N6-trimethyllysine. Residues 37–54 (DRSSFLEEVAKPHELKHA) form the WH2 domain. Lysine 72 carries the N6,N6,N6-trimethyllysine modification.

Monomer.

Its function is as follows. Is able to bind two actin monomers at high concentrations of G-actin. The protein is Actobindin of Acanthamoeba castellanii (Amoeba).